The sequence spans 170 residues: Photosystem I assembly protein Ycf3 (170 aa).

3 TPR repeats span residues 35-68, 72-105, and 120-153; these read AFTY…EIDP, SYIL…NPFL, and GEQA…TPGN.

Belongs to the Ycf3 family.

The protein resides in the plastid. Its subcellular location is the chloroplast thylakoid membrane. Functionally, essential for the assembly of the photosystem I (PSI) complex. May act as a chaperone-like factor to guide the assembly of the PSI subunits. This chain is Photosystem I assembly protein Ycf3, found in Triticum aestivum (Wheat).